The following is a 512-amino-acid chain: Pantetheinase (512 aa).

Positions 1–23 are cleaved as a signal peptide; the sequence is MGMSWWLACAAAFSALCVLKASS. The CN hydrolase domain maps to 32–308; it reads YEHAVILPKD…GKLLFAQLKS (277 aa). Residue Glu-81 is the Proton acceptor of the active site. N-linked (GlcNAc...) asparagine glycans are attached at residues Asn-132 and Asn-148. Lys-180 acts as the Proton donor in catalysis. Cys-213 acts as the Nucleophile in catalysis. 2 N-linked (GlcNAc...) asparagine glycosylation sites follow: Asn-316 and Asn-354. The GPI-anchor amidated asparagine moiety is linked to residue Asn-488. Residues 489–512 constitute a propeptide, removed in mature form; sequence ASSDFIAHSLIIMLIVTPIIHYLC.

The protein belongs to the carbon-nitrogen hydrolase superfamily. BTD/VNN family. As to quaternary structure, monomer. Post-translationally, N-glycosylated. As to expression, detected in kidney (at protein level). Ubiquitous.

Its subcellular location is the cell membrane. It carries out the reaction (R)-pantetheine + H2O = cysteamine + (R)-pantothenate. In terms of biological role, amidohydrolase that hydrolyzes specifically one of the carboamide linkages in D-pantetheine thus recycling pantothenic acid (vitamin B5) and releasing cysteamine. The protein is Pantetheinase (Vnn1) of Mus musculus (Mouse).